A 2879-amino-acid chain; its full sequence is Peramine synthetase ppzA (2879 aa).

A compositionally biased stretch (basic and acidic residues) spans 1–12 (MTYDEGGHRNNE). Positions 1–52 (MTYDEGGHRNNEETPQDVNMSSNNEGMSTSSPTGSYGEIIGQATVSVPQEDQ) are disordered. The segment covering 16-34 (QDVNMSSNNEGMSTSSPTG) has biased composition (polar residues). The tract at residues 351 to 747 (QEQCRLQPNT…VGRKDTQVKI (397 aa)) is adenylation 1. The Carrier 1 domain maps to 882 to 958 (QPLSDMERLL…DLSRQSKYIE (77 aa)). Ser919 carries the post-translational modification O-(pantetheine 4'-phosphoryl)serine. Residues 997-1410 (DAYPCTPLQE…ITILTTEDLE (414 aa)) are condensation. The segment at 1433-1827 (DKVQHRPNAP…LSFVRRKDTT (395 aa)) is adenylation 2. The methylation (Met) domain stretch occupies residues 1958-2050 (LEIGCGSGMM…KYLVKLIQDI (93 aa)). A Carrier 2 domain is found at 2370–2448 (WPTTDTGKEL…RLLLDCCCDD (79 aa)). Ser2407 carries the post-translational modification O-(pantetheine 4'-phosphoryl)serine. A thiesterase (TE) domain region spans residues 2500 to 2817 (TVLLTGANGF…LEDMLQDLDD (318 aa)).

It belongs to the NRP synthetase family. Requires pantetheine 4'-phosphate as cofactor.

The catalysed reaction is (S)-1-pyrroline-5-carboxylate + L-arginine + S-adenosyl-L-methionine + 2 ATP = peramine + 2 AMP + S-adenosyl-L-homocysteine + 2 diphosphate + H2O + 2 H(+). It participates in secondary metabolite biosynthesis. In terms of biological role, nonribosomal peptide synthetase; part of the gene cluster that mediates the biosynthesis of pyrrolopyrazines, secondary metabolites showing insecticidal activity. The single multifunctional NRPS ppzA is responsible for the biosynthesis of peramine. The condensation domain of ppzA is proposed to catalyze formation of a peptide bond between 1-pyrroline-5-carboxylate and arginine. The methylation domain of ppzA would catalyze the N-methylation of the alpha-amino group of arginine. The reductase domain is proposed to be responsible for reduction of the thioester and the cyclization to form an iminium ion resulting in release from the peptide synthetase. Deprotonation of this intermediate and oxidation of the pyrroline ring would give rise to peramine. This final oxidation to give the pyrrole functionality may be spontaneous. In Epichloe species that produce only peramine, the peramine synthetase gene is not localized in a gene cluster, in contrast to Metarhizium species that contain additional pyrrolopyrazine biosynthesis genes. The 2-oxoglutarate-Fe(II) type oxidoreductase ppzC hydroxylates peramine to yield the newly identified compound 8-hydroxyperamine whereas ppzD converts L-proline into trans-4-hydroxy-L-proline, a precursor of peramine biosynthesis. This is Peramine synthetase ppzA from Metarhizium rileyi (strain RCEF 4871) (Nomuraea rileyi).